The following is a 263-amino-acid chain: Complement C1q tumor necrosis factor-related protein 6 (263 aa).

The signal sequence occupies residues 1–24; sequence MRVIMGTASLGSIWAVFLLPLVFG. A glycan (N-linked (GlcNAc...) asparagine) is linked at N76. Residues 80-123 are disordered; the sequence is LKGDKGDRGPSGTPGKPGKNGTRGDRGSQGIKGDKGQAGSPGSS. Residues 82 to 123 enclose the Collagen-like domain; the sequence is GDKGDRGPSGTPGKPGKNGTRGDRGSQGIKGDKGQAGSPGSS. The 140-residue stretch at 124–263 folds into the C1q domain; sequence CQTHYSAFSV…SGHLIKAEDN (140 aa).

Its subcellular location is the secreted. This chain is Complement C1q tumor necrosis factor-related protein 6 (C1qtnf6), found in Rattus norvegicus (Rat).